Here is a 394-residue protein sequence, read N- to C-terminus: NAD(P)H-quinone oxidoreductase subunit H (394 aa).

It belongs to the complex I 49 kDa subunit family. As to quaternary structure, NDH-1 can be composed of about 15 different subunits; different subcomplexes with different compositions have been identified which probably have different functions.

It is found in the cellular thylakoid membrane. The catalysed reaction is a plastoquinone + NADH + (n+1) H(+)(in) = a plastoquinol + NAD(+) + n H(+)(out). It carries out the reaction a plastoquinone + NADPH + (n+1) H(+)(in) = a plastoquinol + NADP(+) + n H(+)(out). NDH-1 shuttles electrons from an unknown electron donor, via FMN and iron-sulfur (Fe-S) centers, to quinones in the respiratory and/or the photosynthetic chain. The immediate electron acceptor for the enzyme in this species is believed to be plastoquinone. Couples the redox reaction to proton translocation, and thus conserves the redox energy in a proton gradient. Cyanobacterial NDH-1 also plays a role in inorganic carbon-concentration. The polypeptide is NAD(P)H-quinone oxidoreductase subunit H (Nostoc sp. (strain PCC 7120 / SAG 25.82 / UTEX 2576)).